We begin with the raw amino-acid sequence, 88 residues long: ATPase inhibitor mai-1, mitochondrial (88 aa).

A compositionally biased stretch (gly residues) spans 1 to 18 (MSGSGSGSGAGHGGGSGG). The interval 1–41 (MSGSGSGSGAGHGGGSGGSIREAGGSLGMMGATREEEYFRR) is disordered. Positions 39–87 (FRRQQKDQLDNLKKKLEADMTQSQQEIRDHEKVLEQHQQRLKEIEKGHG) form a coiled coil.

It belongs to the ATPase inhibitor family. Does not seem to include a transit peptide.

Its subcellular location is the mitochondrion. Thought to be a regulatory component of the ATP-synthesizing complex in the mitochondria. The polypeptide is ATPase inhibitor mai-1, mitochondrial (mai-1) (Caenorhabditis elegans).